Here is a 323-residue protein sequence, read N- to C-terminus: Beta-ketoacyl-[acyl-carrier-protein] synthase III (323 aa).

Residues Cys113 and His250 contribute to the active site. The segment at 251–255 (QANKR) is ACP-binding. The active site involves Asn280.

The protein belongs to the thiolase-like superfamily. FabH family. Homodimer.

It localises to the cytoplasm. The catalysed reaction is malonyl-[ACP] + acetyl-CoA + H(+) = 3-oxobutanoyl-[ACP] + CO2 + CoA. It participates in lipid metabolism; fatty acid biosynthesis. Functionally, catalyzes the condensation reaction of fatty acid synthesis by the addition to an acyl acceptor of two carbons from malonyl-ACP. Catalyzes the first condensation reaction which initiates fatty acid synthesis and may therefore play a role in governing the total rate of fatty acid production. Possesses both acetoacetyl-ACP synthase and acetyl transacylase activities. Its substrate specificity determines the biosynthesis of branched-chain and/or straight-chain of fatty acids. The chain is Beta-ketoacyl-[acyl-carrier-protein] synthase III from Chelativorans sp. (strain BNC1).